The sequence spans 242 residues: 3-deoxy-manno-octulosonate cytidylyltransferase (242 aa).

Belongs to the KdsB family.

The protein resides in the cytoplasm. The catalysed reaction is 3-deoxy-alpha-D-manno-oct-2-ulosonate + CTP = CMP-3-deoxy-beta-D-manno-octulosonate + diphosphate. It participates in nucleotide-sugar biosynthesis; CMP-3-deoxy-D-manno-octulosonate biosynthesis; CMP-3-deoxy-D-manno-octulosonate from 3-deoxy-D-manno-octulosonate and CTP: step 1/1. Its pathway is bacterial outer membrane biogenesis; lipopolysaccharide biosynthesis. Activates KDO (a required 8-carbon sugar) for incorporation into bacterial lipopolysaccharide in Gram-negative bacteria. The protein is 3-deoxy-manno-octulosonate cytidylyltransferase of Anaeromyxobacter dehalogenans (strain 2CP-C).